Reading from the N-terminus, the 267-residue chain is MSNETIKVVIAGPRGRMGQEAVKLAVRTPHFELVGAIDHTYDQQTLREVMSADSDALIYTDIRACFQETKPDVLIDLTTPEIGKKHTKAALEHGVRPVVGTTGFSEADLEELQALTEEKGIGAIIAPNFALGAVLMMKFSQMAANYFEDVEIIELHHDQKLDAPSGTALKTAEMISSVRTEKQQGHPDEKEILPGARGAELNGIRLHSVRLPGLIAHQEVMFGMDGQTLKLRHDSYNRASFMSGVKLSVEQVMKIDQLVYGLENIID.

NAD(+) contacts are provided by residues 12-17 (GPRGRM), 100-102 (GTT), and 126-129 (APNF). His-156 (proton donor/acceptor) is an active-site residue. His-157 serves as a coordination point for (S)-2,3,4,5-tetrahydrodipicolinate. Lys-160 functions as the Proton donor in the catalytic mechanism. Position 166 to 167 (166 to 167 (GT)) interacts with (S)-2,3,4,5-tetrahydrodipicolinate.

Belongs to the DapB family.

The protein localises to the cytoplasm. The enzyme catalyses (S)-2,3,4,5-tetrahydrodipicolinate + NAD(+) + H2O = (2S,4S)-4-hydroxy-2,3,4,5-tetrahydrodipicolinate + NADH + H(+). It catalyses the reaction (S)-2,3,4,5-tetrahydrodipicolinate + NADP(+) + H2O = (2S,4S)-4-hydroxy-2,3,4,5-tetrahydrodipicolinate + NADPH + H(+). It participates in amino-acid biosynthesis; L-lysine biosynthesis via DAP pathway; (S)-tetrahydrodipicolinate from L-aspartate: step 4/4. In terms of biological role, catalyzes the conversion of 4-hydroxy-tetrahydrodipicolinate (HTPA) to tetrahydrodipicolinate. This is 4-hydroxy-tetrahydrodipicolinate reductase from Bacillus velezensis (strain DSM 23117 / BGSC 10A6 / LMG 26770 / FZB42) (Bacillus amyloliquefaciens subsp. plantarum).